The primary structure comprises 428 residues: 3-phosphoshikimate 1-carboxyvinyltransferase (428 aa).

3-phosphoshikimate-binding residues include lysine 20, serine 21, and arginine 25. Lysine 20 serves as a coordination point for phosphoenolpyruvate. Phosphoenolpyruvate contacts are provided by glycine 92 and arginine 120. The 3-phosphoshikimate site is built by serine 166, glutamine 168, aspartate 314, and lysine 341. Glutamine 168 contributes to the phosphoenolpyruvate binding site. The active-site Proton acceptor is the aspartate 314. Phosphoenolpyruvate contacts are provided by arginine 345 and arginine 387.

The protein belongs to the EPSP synthase family. Monomer.

The protein localises to the cytoplasm. It catalyses the reaction 3-phosphoshikimate + phosphoenolpyruvate = 5-O-(1-carboxyvinyl)-3-phosphoshikimate + phosphate. Its pathway is metabolic intermediate biosynthesis; chorismate biosynthesis; chorismate from D-erythrose 4-phosphate and phosphoenolpyruvate: step 6/7. Catalyzes the transfer of the enolpyruvyl moiety of phosphoenolpyruvate (PEP) to the 5-hydroxyl of shikimate-3-phosphate (S3P) to produce enolpyruvyl shikimate-3-phosphate and inorganic phosphate. This Listeria innocua serovar 6a (strain ATCC BAA-680 / CLIP 11262) protein is 3-phosphoshikimate 1-carboxyvinyltransferase.